Here is a 332-residue protein sequence, read N- to C-terminus: MSSAAVVEDALEPTLQNILDQKTLKWLFVGGKGGVGKTTTSCSLAIQLSKVRESVLLISTDPAHNLSDAFGQKFGKEATKVNGFDNLSAMEIDPNSSIQEMIEQSDSQGGAMGSMMQDLAFAIPGVDEAMGFAEIMKHVKSMEYSVIVFDTAPTGHTLRFLSFPSVLEKALAKFSTLGRSLGPMLGQFQSMLGGGGPNQEDMFAKLESMREVITEVNTQFKDPEKTTFVCVCIAEFLSLYETERLIQELTSYEIDTHAIVCNQLLYPKKDSNCQHCRVRKQMQDKYVGEMMELYADDFHIVKMPLLTEEVRGTDKLKDFSNFLVTPYVPPTE.

32–39 (KGGVGKTT) is a binding site for ATP. Aspartate 61 is a catalytic residue. Residues glutamate 235 and asparagine 262 each contribute to the ATP site. 2 residues coordinate Zn(2+): cysteine 273 and cysteine 276.

This sequence belongs to the arsA ATPase family. In terms of assembly, homodimer.

It localises to the cytoplasm. It is found in the endoplasmic reticulum. In terms of biological role, ATPase required for the post-translational delivery of tail-anchored (TA) proteins to the endoplasmic reticulum. Recognizes and selectively binds the transmembrane domain of TA proteins in the cytosol. This complex then targets to the endoplasmic reticulum by membrane-bound receptors, where the tail-anchored protein is released for insertion. This process is regulated by ATP binding and hydrolysis. ATP binding drives the homodimer towards the closed dimer state, facilitating recognition of newly synthesized TA membrane proteins. ATP hydrolysis is required for insertion. Subsequently, the homodimer reverts towards the open dimer state, lowering its affinity for the membrane-bound receptor, and returning it to the cytosol to initiate a new round of targeting. This Mycosarcoma maydis (Corn smut fungus) protein is ATPase GET3.